The sequence spans 234 residues: Leucyl/phenylalanyl-tRNA--protein transferase (234 aa).

It belongs to the L/F-transferase family.

It is found in the cytoplasm. The catalysed reaction is N-terminal L-lysyl-[protein] + L-leucyl-tRNA(Leu) = N-terminal L-leucyl-L-lysyl-[protein] + tRNA(Leu) + H(+). It catalyses the reaction N-terminal L-arginyl-[protein] + L-leucyl-tRNA(Leu) = N-terminal L-leucyl-L-arginyl-[protein] + tRNA(Leu) + H(+). It carries out the reaction L-phenylalanyl-tRNA(Phe) + an N-terminal L-alpha-aminoacyl-[protein] = an N-terminal L-phenylalanyl-L-alpha-aminoacyl-[protein] + tRNA(Phe). Functions in the N-end rule pathway of protein degradation where it conjugates Leu, Phe and, less efficiently, Met from aminoacyl-tRNAs to the N-termini of proteins containing an N-terminal arginine or lysine. The polypeptide is Leucyl/phenylalanyl-tRNA--protein transferase (Pectobacterium carotovorum subsp. carotovorum (strain PC1)).